We begin with the raw amino-acid sequence, 153 residues long: SsrA-binding protein (153 aa).

The protein belongs to the SmpB family.

The protein resides in the cytoplasm. Functionally, required for rescue of stalled ribosomes mediated by trans-translation. Binds to transfer-messenger RNA (tmRNA), required for stable association of tmRNA with ribosomes. tmRNA and SmpB together mimic tRNA shape, replacing the anticodon stem-loop with SmpB. tmRNA is encoded by the ssrA gene; the 2 termini fold to resemble tRNA(Ala) and it encodes a 'tag peptide', a short internal open reading frame. During trans-translation Ala-aminoacylated tmRNA acts like a tRNA, entering the A-site of stalled ribosomes, displacing the stalled mRNA. The ribosome then switches to translate the ORF on the tmRNA; the nascent peptide is terminated with the 'tag peptide' encoded by the tmRNA and targeted for degradation. The ribosome is freed to recommence translation, which seems to be the essential function of trans-translation. This Orientia tsutsugamushi (strain Boryong) (Rickettsia tsutsugamushi) protein is SsrA-binding protein.